We begin with the raw amino-acid sequence, 559 residues long: 3-aminoavenalumate diazotase (559 aa).

Position 181 (Ser-181) interacts with Mg(2+). Residues Ala-227, Gly-332, and Ser-336 each contribute to the ATP site. Glu-337 is a Mg(2+) binding site. Residues Asp-416 and Arg-437 each contribute to the ATP site.

This sequence belongs to the ATP-dependent AMP-binding enzyme family. Mg(2+) is required as a cofactor.

The enzyme catalyses 3-aminoavenalumate + nitrite + ATP = 3-diazoavenalumate + AMP + diphosphate + H2O. It carries out the reaction (E)-3-aminocoumarate + nitrite + ATP + H(+) = (E)-3-diazocoumarate + AMP + diphosphate + H2O. It catalyses the reaction 3-amino-4-hydroxybenzoate + nitrite + ATP + H(+) = 3-diazo-4-hydroxybenzoate + AMP + diphosphate + H2O. Its function is as follows. Ligase involved in the biosynthesis of avenalumic acid (AVA). Catalyzes the diazotization of 3-aminoavenalumic acid (3-AAA) to 3-diazoavenalumic acid (3-DAA). It can also act on 3-aminocoumaric acid (3-ACA) and 3-amino-4-hydroxybenzoic acid (3,4-AHBA) with lower activity. The chain is 3-aminoavenalumate diazotase from Streptomyces sp.